Here is an 893-residue protein sequence, read N- to C-terminus: Exocyst complex component 4 (893 aa).

The interval 1 to 27 is disordered; it reads MNENGATPVAAARRHRPLPAERATSNS.

It belongs to the SEC8 family. As to quaternary structure, the exocyst complex is composed of sec-3/exoc1, sec-5/exoc2, sec-6/exoc3, sec-8/exoc4, sec-10/exoc5, sec-15/exoc6, exo-70/exoc7 and exo-84/exoc8. In terms of tissue distribution, pseudocoelom.

Functionally, component of the exocyst complex involved in the docking of exocytic vesicles with fusion sites on the plasma membrane. This is Exocyst complex component 4 (sec-8) from Caenorhabditis elegans.